Here is a 159-residue protein sequence, read N- to C-terminus: U1 small nuclear ribonucleoprotein C (159 aa).

The Matrin-type zinc-finger motif lies at 4-36 (FYCDYCDTYLTHDSPSVRKTHCSGRKHKENVKD). 2 disordered regions span residues 63–95 (PPTP…MPAP) and 139–159 (MRPP…RPDR). Over residues 77-95 (IPPPPSLGGPPRPGMMPAP) the composition is skewed to pro residues.

The protein belongs to the U1 small nuclear ribonucleoprotein C family. Component of the U1 snRNP. The U1 snRNP is composed of the U1 snRNA and the 7 core Sm proteins snrpb, snrpd1, snrpd2, snrpd3, snrpe, snrpf and snrpg that assemble in a heptameric protein ring on the Sm site of the small nuclear RNA to form the core snRNP, and at least 3 U1 snRNP-specific proteins snrnp70/U1-70K, snrpa/U1-A and snrpc/U1-C. snrpc/U1-C interacts with U1 snRNA and the 5' splice-site region of the pre-mRNA.

Its subcellular location is the nucleus. In terms of biological role, component of the spliceosomal U1 snRNP, which is essential for recognition of the pre-mRNA 5' splice-site and the subsequent assembly of the spliceosome. SNRPC/U1-C is directly involved in initial 5' splice-site recognition for both constitutive and regulated alternative splicing. The interaction with the 5' splice-site seems to precede base-pairing between the pre-mRNA and the U1 snRNA. Stimulates commitment or early (E) complex formation by stabilizing the base pairing of the 5' end of the U1 snRNA and the 5' splice-site region. The sequence is that of U1 small nuclear ribonucleoprotein C from Xenopus laevis (African clawed frog).